Here is a 34-residue protein sequence, read N- to C-terminus: uncharacterized protein (34 aa).

Over residues 1 to 12 (MFSHFEVSENRP) the composition is skewed to basic and acidic residues. The interval 1-21 (MFSHFEVSENRPRKQPRRKRI) is disordered.

This is an uncharacterized protein from Saccharomyces cerevisiae (strain ATCC 204508 / S288c) (Baker's yeast).